We begin with the raw amino-acid sequence, 381 residues long: L-lactate dehydrogenase (381 aa).

One can recognise an FMN hydroxy acid dehydrogenase domain in the interval 1–380; it reads MIISSASDYR…KPEALVDLSK (380 aa). A substrate-binding site is contributed by Y24. 2 residues coordinate FMN: S106 and Q127. Position 129 (Y129) interacts with substrate. FMN is bound at residue T155. Residue R164 participates in substrate binding. Residue K251 coordinates FMN. Catalysis depends on H275, which acts as the Proton acceptor. Residue R278 participates in substrate binding. 306–330 is an FMN binding site; sequence DSGIRNGLDIVRMLALGADATMLGR.

The protein belongs to the FMN-dependent alpha-hydroxy acid dehydrogenase family. The cofactor is FMN.

Its subcellular location is the cell inner membrane. It carries out the reaction (S)-lactate + A = pyruvate + AH2. Functionally, catalyzes the conversion of L-lactate to pyruvate. Is coupled to the respiratory chain. This chain is L-lactate dehydrogenase, found in Haemophilus influenzae (strain 86-028NP).